The following is a 316-amino-acid chain: Ribose-phosphate pyrophosphokinase (316 aa).

ATP-binding positions include 39-41 and 98-99; these read DGE and RQ. Mg(2+) contacts are provided by histidine 133 and aspartate 172. Residue lysine 195 is part of the active site. Residues arginine 197, aspartate 221, and 225 to 229 contribute to the D-ribose 5-phosphate site; that span reads DTGGT.

It belongs to the ribose-phosphate pyrophosphokinase family. Class I subfamily. In terms of assembly, homohexamer. The cofactor is Mg(2+).

Its subcellular location is the cytoplasm. The enzyme catalyses D-ribose 5-phosphate + ATP = 5-phospho-alpha-D-ribose 1-diphosphate + AMP + H(+). It participates in metabolic intermediate biosynthesis; 5-phospho-alpha-D-ribose 1-diphosphate biosynthesis; 5-phospho-alpha-D-ribose 1-diphosphate from D-ribose 5-phosphate (route I): step 1/1. Its function is as follows. Involved in the biosynthesis of the central metabolite phospho-alpha-D-ribosyl-1-pyrophosphate (PRPP) via the transfer of pyrophosphoryl group from ATP to 1-hydroxyl of ribose-5-phosphate (Rib-5-P). This chain is Ribose-phosphate pyrophosphokinase, found in Ralstonia nicotianae (strain ATCC BAA-1114 / GMI1000) (Ralstonia solanacearum).